The sequence spans 976 residues: Ephrin type-B receptor 4b (976 aa).

A signal peptide spans 1–23; it reads MDRVCWIMALSWFWMVSTGLVSA. Residues 24–541 are Extracellular-facing; sequence EEEVLMNTKL…ESPSRLMLTG (518 aa). The 180-residue stretch at 25–204 folds into the Eph LBD domain; it reads EEVLMNTKLE…FFKKCPAVSR (180 aa). Disulfide bonds link C69/C186 and C103/C113. 2 Fibronectin type-III domains span residues 326 to 434 and 438 to 529; these read PPSA…TSRD and PVSG…TLPD. Residues 542–562 form a helical membrane-spanning segment; it reads VLVAIGLLILIAVVIVAVFCF. Over 563–976 the chain is Cytoplasmic; the sequence is RRSTRRRDPD…LRIHGGSLRY (414 aa). One can recognise a Protein kinase domain in the interval 613–897; it reads VKIEEVIGAG…IPDGPSHPLL (285 aa). Residues 619 to 627 and K645 each bind ATP; that span reads IGAGEFGEV. Catalysis depends on D738, which acts as the Proton acceptor. The 65-residue stretch at 906–970 folds into the SAM domain; it reads SHCSSVADWL…LSSVQTLRIH (65 aa).

The protein belongs to the protein kinase superfamily. Tyr protein kinase family. Ephrin receptor subfamily.

It is found in the cell membrane. The enzyme catalyses L-tyrosyl-[protein] + ATP = O-phospho-L-tyrosyl-[protein] + ADP + H(+). Receptor tyrosine kinase which binds promiscuously transmembrane ephrin-B family ligands residing on adjacent cells, leading to contact-dependent bidirectional signaling into neighboring cells. The signaling pathway downstream of the receptor is referred to as forward signaling while the signaling pathway downstream of the ephrin ligand is referred to as reverse signaling. Together with its cognate ligand/functional ligand EFNB2 is involved in the regulation of cell adhesion and cell migration, and plays a central role in heart morphogenesis, angiogenesis and blood vessel remodeling and permeability. EPHB4-mediated forward signaling controls cellular repulsion and segregation from EFNB2-expressing cells. Involved in somitogenesis. This is Ephrin type-B receptor 4b from Danio rerio (Zebrafish).